The following is a 129-amino-acid chain: MSNVPAELKYSKEHEWLRKEADGTYTVGITEHAQELLGDMVFVDLPEVGATVSAGDDCAVAESVKAASDIYAPVSGEIVAVNDALSDSPELVNSEPYTGGWIFKIKASDESELESLLDATAYEALLEDE.

The 83-residue stretch at 24-106 (TYTVGITEHA…YTGGWIFKIK (83 aa)) folds into the Lipoyl-binding domain. Lys65 bears the N6-lipoyllysine mark.

This sequence belongs to the GcvH family. As to quaternary structure, the glycine cleavage system is composed of four proteins: P, T, L and H. (R)-lipoate serves as cofactor.

The glycine cleavage system catalyzes the degradation of glycine. The H protein shuttles the methylamine group of glycine from the P protein to the T protein. In Salmonella choleraesuis (strain SC-B67), this protein is Glycine cleavage system H protein.